Reading from the N-terminus, the 445-residue chain is Xylose isomerase (445 aa).

Active-site residues include histidine 109 and aspartate 112. 7 residues coordinate Mg(2+): glutamate 240, glutamate 276, histidine 279, aspartate 304, aspartate 315, aspartate 317, and aspartate 347.

It belongs to the xylose isomerase family. As to quaternary structure, homotetramer. It depends on Mg(2+) as a cofactor.

It localises to the cytoplasm. It catalyses the reaction alpha-D-xylose = alpha-D-xylulofuranose. The chain is Xylose isomerase from Xanthomonas oryzae pv. oryzae (strain MAFF 311018).